We begin with the raw amino-acid sequence, 250 residues long: MSDLTSTILFEHPLNEKMRTWLRMEFLLQQLESHRSLDNIANALTFFRTASDLIDVLERGEVRTDLLKELERQQQKLQQWADIPGVDVSLVDSLRNQLKSRAAVLMSAPRIGQSLKEDRLISVVRQRLSIPGGCCSFDLPTLHVWLHQPSEQRDQHINKLLASLAPLHQSLTIILDLIRQSCPLRSQISLNGFFQDNAGGADLLRLRLPLDPQLYPQISGHKTRYAIRFLALDSENGTVPARLSFELACC.

This sequence belongs to the ZapD family. In terms of assembly, interacts with FtsZ.

It localises to the cytoplasm. In terms of biological role, cell division factor that enhances FtsZ-ring assembly. Directly interacts with FtsZ and promotes bundling of FtsZ protofilaments, with a reduction in FtsZ GTPase activity. This chain is Cell division protein ZapD, found in Yersinia pestis bv. Antiqua (strain Antiqua).